Here is a 141-residue protein sequence, read N- to C-terminus: Small ribosomal subunit protein uS11 (141 aa).

This sequence belongs to the universal ribosomal protein uS11 family. As to quaternary structure, part of the 30S ribosomal subunit.

Its function is as follows. Located on the platform of the 30S subunit. This Pyrobaculum calidifontis (strain DSM 21063 / JCM 11548 / VA1) protein is Small ribosomal subunit protein uS11.